Here is an 873-residue protein sequence, read N- to C-terminus: Inner centromere protein A (873 aa).

Disordered regions lie at residues A50–T124, P237–K270, F282–H452, K484–R535, Q566–Q649, L683–A736, and D781–A800. Residues S60–T69 are compositionally biased toward basic residues. Positions R87–Q105 are enriched in low complexity. Positions N239–G254 are enriched in polar residues. Positions S261–K270 are enriched in basic residues. The span at S286–R297 shows a compositional bias: basic and acidic residues. A compositionally biased stretch (low complexity) spans S314 to S325. The span at P437 to H452 shows a compositional bias: pro residues. Composition is skewed to basic and acidic residues over residues T491–R535, Q566–A584, K591–Q649, and L683–E733. The interval K494 to E707 is SAH. Positions L782 to P856 are IN box. A phosphoserine mark is found at S849 and S850.

The protein belongs to the INCENP family. In terms of assembly, component of the CPC composed of survivin/birc5, incenp, cdca8/borealin and/or cdca9/dasra-A, and aurkb/aurora-B. Interacts (via C-terminus) with aurkb (via N-terminus and kinase domain). Interacts (via N-terminus) with birc5.1, birc5.2, cdca8 and cdca9. Interacts with mtus1.

Its subcellular location is the nucleus. It is found in the chromosome. It localises to the centromere. The protein resides in the cytoplasm. The protein localises to the cytoskeleton. Its subcellular location is the spindle. It is found in the midbody. It localises to the kinetochore. Functionally, component of the chromosomal passenger complex (CPC), a complex that acts as a key regulator of mitosis. The CPC complex has essential functions at the centromere in ensuring correct chromosome alignment and segregation and is required for chromatin-induced microtubule stabilization and spindle assembly. Acts as a scaffold regulating CPC localization and activity. The C-terminus associates with aurkb/aurora-B, the N-terminus associated with cdca8/borealin and/or cdca9/dasra-A tethers the CPC to the inner centromere, and the microtubule binding activity within the central SAH domain directs aurkb/aurora-B toward substrates near microtubules. Activates aurkb. The chain is Inner centromere protein A (incenp-a) from Xenopus laevis (African clawed frog).